Here is a 459-residue protein sequence, read N- to C-terminus: Exodeoxyribonuclease 7 large subunit (459 aa).

This sequence belongs to the XseA family. In terms of assembly, heterooligomer composed of large and small subunits.

It is found in the cytoplasm. The catalysed reaction is Exonucleolytic cleavage in either 5'- to 3'- or 3'- to 5'-direction to yield nucleoside 5'-phosphates.. Functionally, bidirectionally degrades single-stranded DNA into large acid-insoluble oligonucleotides, which are then degraded further into small acid-soluble oligonucleotides. The protein is Exodeoxyribonuclease 7 large subunit of Yersinia pseudotuberculosis serotype O:3 (strain YPIII).